The primary structure comprises 667 residues: Acetolactate synthase 1, chloroplastic (667 aa).

The segment covering 1–35 (MAAAAPSPSSSAFSKTLSPSSSTSSTLLPRSTFPF) has biased composition (low complexity). The tract at residues 1-45 (MAAAAPSPSSSAFSKTLSPSSSTSSTLLPRSTFPFPHHPHKTTPP) is disordered. The N-terminal 94 residues, 1-94 (MAAAAPSPSS…VSRFAPDEPR (94 aa)), are a transit peptide targeting the chloroplast. Position 141 (Glu141) interacts with thiamine diphosphate. Cys161 and Cys307 are oxidised to a cystine. FAD is bound by residues Arg243, 349–370 (HGTV…FGVR), and 392–411 (DIDS…ICAD). A thiamine pyrophosphate binding region spans residues 484–564 (QHQMWAAQYY…VKIMLLNNQH (81 aa)). Mg(2+) contacts are provided by Asp535 and Asn562.

It belongs to the TPP enzyme family. Requires Mg(2+) as cofactor. Thiamine diphosphate is required as a cofactor.

It localises to the plastid. The protein localises to the chloroplast. The catalysed reaction is 2 pyruvate + H(+) = (2S)-2-acetolactate + CO2. It participates in amino-acid biosynthesis; L-isoleucine biosynthesis; L-isoleucine from 2-oxobutanoate: step 1/4. Its pathway is amino-acid biosynthesis; L-valine biosynthesis; L-valine from pyruvate: step 1/4. The polypeptide is Acetolactate synthase 1, chloroplastic (ALS SURA) (Nicotiana tabacum (Common tobacco)).